Consider the following 425-residue polypeptide: Inositol hexakisphosphate kinase 2 (425 aa).

ATP contacts are provided by residues 206 to 208 and Asp219; that span reads ENL. Substrate-binding positions include 215–223, Lys221, and 235–242; these read PCVLDLKMG and KAANQIRK. An ATP-binding site is contributed by Asp382. Substrate is bound at residue His385.

The protein belongs to the inositol phosphokinase (IPK) family. Highly expressed in small intestine.

The protein localises to the nucleus. It catalyses the reaction 1D-myo-inositol hexakisphosphate + ATP = 5-diphospho-1D-myo-inositol 1,2,3,4,6-pentakisphosphate + ADP. Its pathway is phospholipid metabolism; phosphatidylinositol metabolism. In terms of biological role, converts inositol hexakisphosphate (InsP6) to diphosphoinositol pentakisphosphate (InsP7/PP-InsP5). The polypeptide is Inositol hexakisphosphate kinase 2 (Ip6k2) (Rattus norvegicus (Rat)).